We begin with the raw amino-acid sequence, 206 residues long: Small ribosomal subunit protein uS4 (206 aa).

The S4 RNA-binding domain maps to 96 to 156 (GRLDNVVYRM…EKAKNQLRVK (61 aa)).

The protein belongs to the universal ribosomal protein uS4 family. Part of the 30S ribosomal subunit. Contacts protein S5. The interaction surface between S4 and S5 is involved in control of translational fidelity.

Functionally, one of the primary rRNA binding proteins, it binds directly to 16S rRNA where it nucleates assembly of the body of the 30S subunit. With S5 and S12 plays an important role in translational accuracy. This is Small ribosomal subunit protein uS4 from Marinobacter nauticus (strain ATCC 700491 / DSM 11845 / VT8) (Marinobacter aquaeolei).